A 462-amino-acid polypeptide reads, in one-letter code: Signal recognition particle protein (462 aa).

Residues 107-114, 190-194, and 248-251 contribute to the GTP site; these read GLQGAGKT, DTAGR, and TKVD.

This sequence belongs to the GTP-binding SRP family. SRP54 subfamily. As to quaternary structure, part of the signal recognition particle protein translocation system, which is composed of SRP and FtsY. SRP is a ribonucleoprotein composed of Ffh and a 4.5S RNA molecule.

It localises to the cytoplasm. It catalyses the reaction GTP + H2O = GDP + phosphate + H(+). Its function is as follows. Involved in targeting and insertion of nascent membrane proteins into the cytoplasmic membrane. Binds to the hydrophobic signal sequence of the ribosome-nascent chain (RNC) as it emerges from the ribosomes. The SRP-RNC complex is then targeted to the cytoplasmic membrane where it interacts with the SRP receptor FtsY. Interaction with FtsY leads to the transfer of the RNC complex to the Sec translocase for insertion into the membrane, the hydrolysis of GTP by both Ffh and FtsY, and the dissociation of the SRP-FtsY complex into the individual components. This Haemophilus influenzae (strain ATCC 51907 / DSM 11121 / KW20 / Rd) protein is Signal recognition particle protein.